Reading from the N-terminus, the 170-residue chain is MAVKIKLARFGKIRNPQYRISVADARNRRDGRAIEVIGRYHPKEDPSIIEIDSERAQYWLGVGAQPTEPVLQLLKITGDWQKFKGLPGAEGTLKHKEPKPSKLDLFNAALAEAEGGPSTEATTPKKKKAPAKKDEQPTEKAAEPAAEKAAEPAAEAPAEAAAESEAPAAE.

Positions 109 to 170 (ALAEAEGGPS…AAESEAPAAE (62 aa)) are disordered. Over residues 131 to 150 (AKKDEQPTEKAAEPAAEKAA) the composition is skewed to basic and acidic residues. The span at 151-170 (EPAAEAPAEAAAESEAPAAE) shows a compositional bias: low complexity.

Belongs to the bacterial ribosomal protein bS16 family.

The polypeptide is Small ribosomal subunit protein bS16 (Mycolicibacterium gilvum (strain PYR-GCK) (Mycobacterium gilvum (strain PYR-GCK))).